The sequence spans 202 residues: Small ribosomal subunit protein uS4c (202 aa).

Residues 89 to 152 (MRLDNIIFRL…QSNTFINNCI (64 aa)) form the S4 RNA-binding domain.

Belongs to the universal ribosomal protein uS4 family. As to quaternary structure, part of the 30S ribosomal subunit. Contacts protein S5. The interaction surface between S4 and S5 is involved in control of translational fidelity.

It localises to the plastid. Its function is as follows. One of the primary rRNA binding proteins, it binds directly to 16S rRNA where it nucleates assembly of the body of the 30S subunit. In terms of biological role, with S5 and S12 plays an important role in translational accuracy. This chain is Small ribosomal subunit protein uS4c (rps4), found in Epifagus virginiana (Beechdrops).